A 509-amino-acid chain; its full sequence is Glucose-1-phosphate adenylyltransferase large subunit 4, chloroplastic/amyloplastic (509 aa).

The transit peptide at 1-36 (MATCSWAATTAAAAPPRPPARCRSRVAALRRTAAAS) directs the protein to the chloroplast.

The protein belongs to the bacterial/plant glucose-1-phosphate adenylyltransferase family. As to quaternary structure, heterotetramer composed of two small and two large subunits. Expressed in leaves and stems.

Its subcellular location is the plastid. The protein localises to the chloroplast. It carries out the reaction alpha-D-glucose 1-phosphate + ATP + H(+) = ADP-alpha-D-glucose + diphosphate. Its pathway is glycan biosynthesis; starch biosynthesis. With respect to regulation, activated by 3'phosphoglycerate, inhibited by orthophosphate. Allosteric regulation. In terms of biological role, involved in synthesis of starch. Catalyzes the synthesis of ADP-glucose, a molecule that serves as an activated glycosyl donor for alpha-1,4-glucan synthesis. Essential for starch synthesis in leaf chloroplasts. This is Glucose-1-phosphate adenylyltransferase large subunit 4, chloroplastic/amyloplastic from Oryza sativa subsp. japonica (Rice).